Consider the following 664-residue polypeptide: MENERVEREQSQFQEDEFIDSRKPPPWRKQITVRAIVASLLIGIVYSVICLKLNLTTGLVPNLNISSALLAFVFLKSWTKVLQKAGIATTPFTRQENTIAQTCAVACYSISLAGGFASYLLGLNRRTYEETGVNTEGNNPRGIKEPGVGWMTSFLFVTSFIGLVVLVPLRKVMIIDYKLTYPSGTATAVLINGFHTSKGDKTAKKQIRGFIKSFGLSFFWAFFGWFYSGGEKCGFSQFPTFGLQALDKTFYFDFSMTYVGAGMICSHLVNLSLLFGAILSWGIMWPLIARLKGEWFPATLKDNSMQGLNGYKVFICIALILGDGLYNFVKILFFTGRSFHSRLSKTNSISTLVEVPEDSTKESDNLKRENEVFVRESIPLWMACVGYLFFSLVSIIAIPLMFPQLKWYFVLVAYLLAPSLSFCNAYGAGLTDMNMAYNYGKAALFVMAALAGKNDGVVAGMVACGLIKSIVSVSADLMHDFKTGHLTQTSPRSMLVAQAIGTAIGCVVAPLTFFLFYKAFDVGNQNGEYKAPYAMIYRNMAIIGVQGPSALPKHCLELCYGFFAFAVAANLARDLLPDKPGKWIPLPMAMAVPFLVGGSFAIDMCIGSLVVYVWKKVNRKKADVMVPAVASGLICGDGLWILPSSLLALAKVRPPICMNFTAAH.

14 helical membrane-spanning segments follow: residues 31 to 51 (ITVR…VICL), 55 to 75 (LTTG…FVFL), 103 to 123 (CAVA…LLGL), 147 to 167 (GVGW…VVLV), 209 to 229 (GFIK…FYSG), 268 to 288 (LVNL…WPLI), 314 to 334 (FICI…ILFF), 378 to 398 (IPLW…IIAI), 409 to 429 (FVLV…YGAG), 457 to 477 (VVAG…SADL), 496 to 516 (VAQA…FFLF), 549 to 569 (SALP…AVAA), 594 to 614 (FLVG…VYVW), and 629 to 649 (VASG…LLAL).

The protein belongs to the YSL (TC 2.A.67.2) family. As to expression, expressed in roots, leaves and weakly in shoots. Restricted to the veins, to the central cylinder of the young roots and to the pericycle and the endodermis cells facing the meta-xylem tubes in older roots. Expressed in the vasculature of sepals, petals, anthers, stigma and siliques, but not in developing seeds or in meristematic zones.

The protein resides in the cell membrane. Functionally, may be involved in the lateral transport of nicotianamine-chelated metals in the vasculature. The chain is Metal-nicotianamine transporter YSL2 (YSL2) from Arabidopsis thaliana (Mouse-ear cress).